Reading from the N-terminus, the 538-residue chain is Protein PNS1 (538 aa).

Positions 1-54 are enriched in low complexity; it reads MGESDAYYNGGQQQQYNGGYQQQYQPQPPAASYQAPPQQPYQQQPYQQGPPQNG. The disordered stretch occupies residues 1-67; it reads MGESDAYYNG…GNGYMPAQGY (67 aa). At 1-88 the chain is on the cytoplasmic side; that stretch reads MGESDAYYNG…FKIAKPKYND (88 aa). The helical transmembrane segment at 89–109 threads the bilayer; the sequence is LWAGILLILVFAGFVVVSGLA. Residues 110-137 are Extracellular-facing; that stretch reads LQGYSANKGNAGDGIYNNKNDFSPNTST. N-linked (GlcNAc...) asparagine glycosylation occurs at Asn134. The helical transmembrane segment at 138 to 158 threads the bilayer; that stretch reads VILFMFVLAVAFVLSYAYVWM. Residues 159–165 are Cytoplasmic-facing; that stretch reads ARLFPKQ. The chain crosses the membrane as a helical span at residues 166-186; the sequence is FIWVTGILNVCWAIGTAIFYL. The Extracellular segment spans residues 187–191; it reads WRKYW. The chain crosses the membrane as a helical span at residues 192 to 212; sequence SAGIVFLIFGLFMAFCFWTWI. Over 213–239 the chain is Cytoplasmic; that stretch reads SRIPFSALMLKTTIDVSKKYGHVYLVS. A helical membrane pass occupies residues 240–260; sequence LIGGIIATAFSAWYAITLVGI. The Extracellular segment spans residues 261–280; sequence YVKYQPAQDNPSCADGGCGK. Residues 281-301 traverse the membrane as a helical segment; sequence GKVIGLIAFITFAMYWFSEWL. Residues 302-335 are Cytoplasmic-facing; sequence KNTIHTTIAGVYGSWYFNPHNFPKDATRASAKRA. A helical membrane pass occupies residues 336–356; sequence LTYSFGSIALGSLLVAIIQFL. At 357–372 the chain is on the extracellular side; the sequence is RQICNAARNQEGADGS. The chain crosses the membrane as a helical span at residues 373–393; the sequence is FVGYAIFCCISCLLGLLEWAV. At 394–434 the chain is on the cytoplasmic side; the sequence is EFINRYAFCHIALYGKAYFAAAKDTWKMIKDRGIDALINDC. A helical membrane pass occupies residues 435 to 455; sequence LIGPVLSFGALFIAYACALLA. The Extracellular portion of the chain corresponds to 456-474; it reads YLYLYFTDPAYNSDGQYTA. A helical transmembrane segment spans residues 475-495; the sequence is VVMAFSFLIGFQIANVFTTPI. At 496–538 the chain is on the cytoplasmic side; the sequence is SSGIETIFVAAGWDPQVMWRDHPELYNEMVRVYPKVQQVIKDR.

This sequence belongs to the CTL (choline transporter-like) family.

It localises to the cell membrane. Its function is as follows. Probably involved in transport through the plasma membrane. The chain is Protein PNS1 (PNS1) from Gibberella zeae (strain ATCC MYA-4620 / CBS 123657 / FGSC 9075 / NRRL 31084 / PH-1) (Wheat head blight fungus).